Consider the following 80-residue polypeptide: Sulfur carrier protein TusA (80 aa).

Cys-17 serves as the catalytic Cysteine persulfide intermediate.

This sequence belongs to the sulfur carrier protein TusA family.

The protein resides in the cytoplasm. Sulfur carrier protein which probably makes part of a sulfur-relay system. The polypeptide is Sulfur carrier protein TusA (Pseudomonas putida (strain GB-1)).